Consider the following 382-residue polypeptide: MGDWSALGKLLDKVQAYSTAGGKVWLSVLFIFRILLLGTAVESAWGDEQSAFRCNTQQPGCENVCYDKSFPISHVRFWVLQIIFVSVPTLLYLAHVFYVMRKEEKLNKKEEELKVAQTDGVNVEMHLKQIEIKKFKYGIEEHGKVKMRGGLLRTYIISILFKSVFEVAFLLIQWYIYGFSLSAVYTCKRDPCPHQVDCFLSRPTEKTIFIIFMLVVSLVSLALNIIELFYVFFKGVKDRVKGRSDPYHATTGPLSPSKDCGSPKYAYFNGCSSPTAPLSPMSPPGYKLVTGDRNNSSCRNYNKQASEQNWANYSAEQNRMGQAGSTISNSHAQPFDFPDDNQNAKKVAAGHELQPLAIVDQRPSSRASSRASSRPRPDDLEI.

At 2–23 (GDWSALGKLLDKVQAYSTAGGK) the chain is on the cytoplasmic side. Residue serine 5 is modified to Phosphoserine. A helical membrane pass occupies residues 24–44 (VWLSVLFIFRILLLGTAVESA). The Extracellular portion of the chain corresponds to 45–76 (WGDEQSAFRCNTQQPGCENVCYDKSFPISHVR). 2 disulfides stabilise this stretch: cysteine 54/cysteine 192 and cysteine 187/cysteine 198. Residues 77–97 (FWVLQIIFVSVPTLLYLAHVF) traverse the membrane as a helical segment. Over 98-155 (YVMRKEEKLNKKEEELKVAQTDGVNVEMHLKQIEIKKFKYGIEEHGKVKMRGGLLRTY) the chain is Cytoplasmic. Lysine 144 is covalently cross-linked (Glycyl lysine isopeptide (Lys-Gly) (interchain with G-Cter in SUMO)). A helical transmembrane segment spans residues 156–176 (IISILFKSVFEVAFLLIQWYI). The Extracellular portion of the chain corresponds to 177-207 (YGFSLSAVYTCKRDPCPHQVDCFLSRPTEKT). The chain crosses the membrane as a helical span at residues 208–228 (IFIIFMLVVSLVSLALNIIEL). The Cytoplasmic segment spans residues 229-382 (FYVFFKGVKD…SRPRPDDLEI (154 aa)). Lysine 237 is covalently cross-linked (Glycyl lysine isopeptide (Lys-Gly) (interchain with G-Cter in SUMO)). An interaction with NOV region spans residues 244-382 (SDPYHATTGP…SRPRPDDLEI (139 aa)). Tyrosine 247 is subject to Phosphotyrosine. Phosphoserine occurs at positions 255, 257, and 262. The interaction with UBQLN4 stretch occupies residues 264–382 (KYAYFNGCSS…SRPRPDDLEI (119 aa)). Cysteine 271 bears the S-nitrosocysteine mark. Threonine 275 is modified (phosphothreonine). Residues serine 306, serine 314, and serine 325 each carry the phosphoserine modification. Residues 317 to 332 (QNRMGQAGSTISNSHA) are compositionally biased toward polar residues. Residues 317-382 (QNRMGQAGST…SRPRPDDLEI (66 aa)) form a disordered region. A Phosphothreonine modification is found at threonine 326. Phosphoserine is present on residues serine 328, serine 330, and serine 365. Residues 362–374 (RPSSRASSRASSR) show a composition bias toward low complexity. Serine 368 carries the post-translational modification Phosphoserine; by PKC/PRKCG and PKC/PRKCD. Serine 369 and serine 373 each carry phosphoserine.

It belongs to the connexin family. Alpha-type (group II) subfamily. In terms of assembly, a connexon is composed of a hexamer of connexins. Interacts with SGSM3. Interacts with RIC1/CIP150. Interacts with CNST and CSNK1D. Interacts (via C-terminus) with TJP1. Interacts (via C-terminus) with SRC (via SH3 domain). Interacts (not ubiquitinated) with UBQLN4 (via UBA domain). Interacts with NOV. Interacts with TMEM65. Interacts with ANK3/ANKG and PKP2. Post-translationally, contains at least one intramolecular disulfide bond. In terms of processing, phosphorylation at Ser-325, Ser-328 and Ser-330 by CK1 modulates gap junction assembly. Phosphorylated at Ser-368 by PRKCG; phosphorylation induces disassembly of gap junction plaques and inhibition of gap junction activity. Phosphorylation at Ser-368 by PRKCD triggers its internalization into small vesicles leading to proteasome-mediated degradation. Sumoylated with SUMO1, SUMO2 and SUMO3, which may regulate the level of functional Cx43 gap junctions at the plasma membrane. May be desumoylated by SENP1 or SENP2. Post-translationally, S-nitrosylation at Cys-271 is enriched at the muscle endothelial gap junction in arteries, it augments channel permeability and may regulate of smooth muscle cell to endothelial cell communication. In terms of processing, acetylated in the developing cortex; leading to delocalization from the cell membrane. Detected in ventricle and atrium (at protein level).

The protein localises to the cell membrane. It localises to the cell junction. The protein resides in the gap junction. Its subcellular location is the endoplasmic reticulum. Gap junction protein that acts as a regulator of bladder capacity. A gap junction consists of a cluster of closely packed pairs of transmembrane channels, the connexons, through which materials of low MW diffuse from one cell to a neighboring cell. Negative regulator of bladder functional capacity: acts by enhancing intercellular electrical and chemical transmission, thus sensitizing bladder muscles to cholinergic neural stimuli and causing them to contract. May play a role in cell growth inhibition through the regulation of NOV expression and localization. Plays an essential role in gap junction communication in the ventricles. The protein is Gap junction alpha-1 protein (Gja1) of Rattus norvegicus (Rat).